Here is a 376-residue protein sequence, read N- to C-terminus: DNA replication and repair protein RecF (376 aa).

ATP is bound at residue 35 to 42 (GDNGSGKT).

It belongs to the RecF family.

It localises to the cytoplasm. Its function is as follows. The RecF protein is involved in DNA metabolism; it is required for DNA replication and normal SOS inducibility. RecF binds preferentially to single-stranded, linear DNA. It also seems to bind ATP. The sequence is that of DNA replication and repair protein RecF from Agrobacterium fabrum (strain C58 / ATCC 33970) (Agrobacterium tumefaciens (strain C58)).